The sequence spans 255 residues: Ly6/PLAUR domain-containing protein 8 (255 aa).

The N-terminal stretch at 1–20 is a signal peptide; sequence MRGVFIAGVIAAFAITVVDS. 13 N-linked (GlcNAc...) asparagine glycosylation sites follow: Asn-22, Asn-30, Asn-53, Asn-72, Asn-76, Asn-105, Asn-115, Asn-128, Asn-154, Asn-169, Asn-179, Asn-200, and Asn-210. The UPAR/Ly6 domain maps to 121–170; it reads CMSCYGHNKTLCEEKPQKCYEGEQCVFIIAEMVNGSGRVELKGCSDISNS. A lipid anchor (GPI-anchor amidated serine) is attached at Ser-233. A propeptide spans 234–255 (removed in mature form); the sequence is MGTKASFTSSIFGSLLLLKLLF.

Belongs to the CNF-like-inhibitor family. Highly N-glycosylated. Not O-glycosylated. In terms of processing, GPI-anchored. The GPI-anchor is cleaved, leading to secretion into the colonic lumen. In terms of tissue distribution, specifically present in enterocytes located at the uppermost epithelial layer of the colon (at protein level). Exclusively expressed in the large intestine: specifically expressed on the apical surface of epithelial cells located at the uppermost layer of the colonic gland.

It localises to the cell membrane. The protein localises to the secreted. Secreted protein specifically required to prevent invasion of Gram-negative bacteria in the inner mucus layer of the colon epithelium, a portion of the large intestine which is free of commensal microbiota. Prevents invasion of flagellated microbiota by binding to the flagellum of bacteria, such as P.mirabilis, thereby inhibiting bacterial motility in the intestinal lumen. Segregation of intestinal bacteria and epithelial cells in the colon is required to preserve intestinal homeostasis. This chain is Ly6/PLAUR domain-containing protein 8, found in Mus musculus (Mouse).